Reading from the N-terminus, the 370-residue chain is MQTAARRSFDYDMPLIQTPTSACQIRQAWAKVADTPDHETAGRLKDEIKVLLKRKNAVLVAHYYVDPLIQDLALETGGCVGDSLEMARFGAEHEAGTLVVAGVRFMGESAKILCPEKTVLMPDLEAECSLDLGCPEEAFSAFCDQHPDRTVAVYANTSAAVKARADWVVTSSVALEIVSYLKSRGEKLIWGPDRHLGDYIRRETGADMLLWQGSCIVHNEFKGQELAALKAEHPDAVVLVHPESPQSVIELGDVVGSTSKLLKAAVSRPEKKFIVATDLGILHEMQKQAPDKEFIAAPTAGNGGSCKSCAFCPWMAMNSLGGIKHALTGGRNEILLDRKLGEAAKLPLQRMLDFAAGLKRGDVFNGMGPA.

Iminosuccinate-binding residues include histidine 62 and serine 83. Cysteine 128 serves as a coordination point for [4Fe-4S] cluster. Residues 154–156 (YAN) and serine 171 each bind iminosuccinate. A [4Fe-4S] cluster-binding site is contributed by cysteine 215. Residues 241–243 (HPE) and threonine 258 contribute to the iminosuccinate site. [4Fe-4S] cluster is bound at residue cysteine 312.

This sequence belongs to the quinolinate synthase family. Type 1 subfamily. [4Fe-4S] cluster serves as cofactor.

It is found in the cytoplasm. It carries out the reaction iminosuccinate + dihydroxyacetone phosphate = quinolinate + phosphate + 2 H2O + H(+). It functions in the pathway cofactor biosynthesis; NAD(+) biosynthesis; quinolinate from iminoaspartate: step 1/1. Catalyzes the condensation of iminoaspartate with dihydroxyacetone phosphate to form quinolinate. This is Quinolinate synthase from Neisseria gonorrhoeae (strain ATCC 700825 / FA 1090).